The chain runs to 91 residues: Elongation factor 1-beta (91 aa).

Belongs to the EF-1-beta/EF-1-delta family.

Promotes the exchange of GDP for GTP in EF-1-alpha/GDP, thus allowing the regeneration of EF-1-alpha/GTP that could then be used to form the ternary complex EF-1-alpha/GTP/AAtRNA. This is Elongation factor 1-beta from Thermococcus onnurineus (strain NA1).